A 424-amino-acid chain; its full sequence is Virion nicking-joining enzyme (424 aa).

The protein belongs to the orthopoxvirus OPG042 family.

Its subcellular location is the virion. Its function is as follows. DNA nicking enzyme that cleaves extruded cruciform DNA at its tip. Probably nicks viral hairpins. This chain is Virion nicking-joining enzyme (OPG042), found in Cynomys gunnisoni (Gunnison's prairie dog).